Here is a 151-residue protein sequence, read N- to C-terminus: UPF0178 protein Swoo_1444 (151 aa).

Belongs to the UPF0178 family.

In Shewanella woodyi (strain ATCC 51908 / MS32), this protein is UPF0178 protein Swoo_1444.